A 409-amino-acid chain; its full sequence is MKYFVNADFALSRPPEGPVAIYIIPFAEWLVDRGYGLVSTRNQVLMAAGFSSWLRQKGIGLSDINGEHAGRYLLDRVQRPKLGDDAALRHLLAFLRSQNAIAEEIEVDHNPSAVEQHVQAYERHLRDARALSRQTIINYRPVVRDFLSFRFGDGEISLAQLRAADVTDFVQKKVSRLNMRRAKIVTTALRSFLSYARYRGDITSDLAAAVPIVANWSLSSIPRAIGRDDVSRLLSSIDRDTPIGCRDYAMILALARLGLRSSEVVTLELDDIDWVAGRIRVRGKHGRNELPLPADVGEAIADYLWRARPRNASRRVFLRDKAPIRGFVGPSGLGSIVRRSLKRTGIDSPTKGTHQFRHGLASEMLRGGASLGEIGEVLGHRHVQTTAIYAKVDLDALRTLALPWPGEAQ.

One can recognise a Core-binding (CB) domain in the interval 112-197 (SAVEQHVQAY…ALRSFLSYAR (86 aa)). The region spanning 220-402 (SIPRAIGRDD…DLDALRTLAL (183 aa)) is the Tyr recombinase domain. Catalysis depends on residues Arg-260, Lys-284, His-354, Arg-357, and His-380. The active-site O-(3'-phospho-DNA)-tyrosine intermediate is Tyr-389.

The protein belongs to the 'phage' integrase family.

In Sinorhizobium fredii (strain NBRC 101917 / NGR234), this protein is Putative integrase/recombinase y4rA.